A 199-amino-acid chain; its full sequence is N-(5'-phosphoribosyl)anthranilate isomerase (199 aa).

This sequence belongs to the TrpF family.

The enzyme catalyses N-(5-phospho-beta-D-ribosyl)anthranilate = 1-(2-carboxyphenylamino)-1-deoxy-D-ribulose 5-phosphate. The protein operates within amino-acid biosynthesis; L-tryptophan biosynthesis; L-tryptophan from chorismate: step 3/5. The sequence is that of N-(5'-phosphoribosyl)anthranilate isomerase from Campylobacter jejuni subsp. jejuni serotype O:2 (strain ATCC 700819 / NCTC 11168).